Consider the following 164-residue polypeptide: ATP synthase subunit b 2 (164 aa).

A helical transmembrane segment spans residues 4–24 (TFWAFVGLVLFLALLVYFEVP).

Belongs to the ATPase B chain family. F-type ATPases have 2 components, F(1) - the catalytic core - and F(0) - the membrane proton channel. F(1) has five subunits: alpha(3), beta(3), gamma(1), delta(1), epsilon(1). F(0) has three main subunits: a(1), b(2) and c(10-14). The alpha and beta chains form an alternating ring which encloses part of the gamma chain. F(1) is attached to F(0) by a central stalk formed by the gamma and epsilon chains, while a peripheral stalk is formed by the delta and b chains.

Its subcellular location is the cell inner membrane. In terms of biological role, f(1)F(0) ATP synthase produces ATP from ADP in the presence of a proton or sodium gradient. F-type ATPases consist of two structural domains, F(1) containing the extramembraneous catalytic core and F(0) containing the membrane proton channel, linked together by a central stalk and a peripheral stalk. During catalysis, ATP synthesis in the catalytic domain of F(1) is coupled via a rotary mechanism of the central stalk subunits to proton translocation. Component of the F(0) channel, it forms part of the peripheral stalk, linking F(1) to F(0). The sequence is that of ATP synthase subunit b 2 from Bartonella henselae (strain ATCC 49882 / DSM 28221 / CCUG 30454 / Houston 1) (Rochalimaea henselae).